A 160-amino-acid chain; its full sequence is Transcription antitermination protein NusB (160 aa).

This sequence belongs to the NusB family.

Functionally, involved in transcription antitermination. Required for transcription of ribosomal RNA (rRNA) genes. Binds specifically to the boxA antiterminator sequence of the ribosomal RNA (rrn) operons. The protein is Transcription antitermination protein NusB of Maricaulis maris (strain MCS10) (Caulobacter maris).